A 161-amino-acid chain; its full sequence is uncharacterized protein (161 aa).

This is an uncharacterized protein from Archaeoglobus fulgidus (strain ATCC 49558 / DSM 4304 / JCM 9628 / NBRC 100126 / VC-16).